Consider the following 274-residue polypeptide: NH(3)-dependent NAD(+) synthetase (274 aa).

ATP is bound at residue 46–53; it reads GISGGQDS. Residue Asp-52 participates in Mg(2+) binding. Arg-140 provides a ligand contact to deamido-NAD(+). Thr-160 contacts ATP. Glu-165 provides a ligand contact to Mg(2+). Deamido-NAD(+) contacts are provided by Lys-173 and Asp-180. Positions 189 and 211 each coordinate ATP. 260–261 contributes to the deamido-NAD(+) binding site; the sequence is HK.

This sequence belongs to the NAD synthetase family. As to quaternary structure, homodimer.

It carries out the reaction deamido-NAD(+) + NH4(+) + ATP = AMP + diphosphate + NAD(+) + H(+). It functions in the pathway cofactor biosynthesis; NAD(+) biosynthesis; NAD(+) from deamido-NAD(+) (ammonia route): step 1/1. Functionally, catalyzes the ATP-dependent amidation of deamido-NAD to form NAD. Uses ammonia as a nitrogen source. The protein is NH(3)-dependent NAD(+) synthetase of Listeria innocua serovar 6a (strain ATCC BAA-680 / CLIP 11262).